We begin with the raw amino-acid sequence, 877 residues long: MTDNQIPKDYNHKNEVKWQKKWQEEDIYRFIGSGTKPRYIIDTPPPYPTGSIHMGHVLNWVYMDIIARFKRMRGFDVLFPQGWDCHGLPTEVKVEETHNIKKSDVSREEFRRLCVELTQENIRMMKEQMQRLGFSQDWNHEFVTMTPEYMRRTQLSFLRMYRDGLIYQGVHPVNWCPRCETAIAFAEVEYIENETNLNYVRFPVEGADEHITIATTRPELMAACVAVVVHPDDERFREFEDKLIEVPLFGQKVKLIKDPEVDPEFGTGAVMVCTFGDKTDVSWVNRHGLDVIDAIDERGYMTEAAGKYQGLTIAECKEKIVEDLENEGFLLKKEPVRQNVGTCWRCKTPIEILVKKQWFVAVKKLIPQVREAAEEMKWVPGHMKTRLLNWTGSMDWDWCISRQRIFATPIPVWYCSECGRVHVADEEMLPVDPTRDGPGITCECGSTEFIGEEDVLDTWMDSSISPLSVAGWPDESYRELFPADLRPQGHDIIRTWAFYTILRCMALTGEKPFSEIVINGMVFGEDGHKMSKSRGNVIAPEEVLEDYGADALRLWAAGSVPGSDVPFAWKDVKYGYKFLRKFWNAFRFISIHLTENPEVEARPMDRWILSRLMNLVAEVTESLDDYNFAAAVNRVQTFIWHDFCDEYIEAVKYRLYSDEDPESRMAAQNTLRMVLDTCLRLLAPVAPHFTEEVHQHVGEGSIHLRGWPEHIPEIVDPEIERSGDLAVEIIGEIRRFKSSSKMPLNAPLKAATIYTDNESAEMIKPFLDDIAGTMNIGDISLVAGKPEITERAVELEPRMEKIGPEFRSDAPAIISWLTGADPHEVYEEIQRNGEIEVEGNRLTMDHISFRKEVIGTAGERVDVLNLDEPEVIIEIVR.

The short motif at 46–56 (PYPTGSIHMGH) is the 'HIGH' region element. The short motif at 529–533 (KMSKS) is the 'KMSKS' region element. ATP is bound at residue Lys-532.

This sequence belongs to the class-I aminoacyl-tRNA synthetase family. ValS type 2 subfamily.

The protein resides in the cytoplasm. The catalysed reaction is tRNA(Val) + L-valine + ATP = L-valyl-tRNA(Val) + AMP + diphosphate. In terms of biological role, catalyzes the attachment of valine to tRNA(Val). As ValRS can inadvertently accommodate and process structurally similar amino acids such as threonine, to avoid such errors, it has a 'posttransfer' editing activity that hydrolyzes mischarged Thr-tRNA(Val) in a tRNA-dependent manner. This is Valine--tRNA ligase from Methanothermobacter thermautotrophicus (strain ATCC 29096 / DSM 1053 / JCM 10044 / NBRC 100330 / Delta H) (Methanobacterium thermoautotrophicum).